The primary structure comprises 967 residues: Probable serine/threonine-protein kinase DDB_G0290621 (967 aa).

3 disordered regions span residues 65–122 (EDSD…KEKE), 215–251 (SSLSSSINNSSNNNSNISSSPLSSSPLTLSSSSSSSS), and 287–326 (QQQLPPPPPSQQQQQQQQQQQQQNNSMLQQSNNNNISPRT). Residues 66-94 (DSDEDDDDEEDEEDEEDSDEEEDDDVVED) are compositionally biased toward acidic residues. Positions 95–122 (DNTKDIGKSRDSDKSIKGKEKGKEKEKE) are enriched in basic and acidic residues. Positions 297 to 326 (QQQQQQQQQQQQQNNSMLQQSNNNNISPRT) are enriched in low complexity. One can recognise a Protein kinase domain in the interval 345-610 (FNDSNKIGEG…EIRSRLSEII (266 aa)). Residues 351–359 (IGEGGQCSI) and lysine 368 each bind ATP. The active-site Proton acceptor is the aspartate 467. Disordered stretches follow at residues 634–667 (DDSLINNNNNNNQNNNNQNNNNNNNNNNNNNNNN), 700–752 (STSN…NNNI), and 862–882 (TSSSSNKNNNNNNNDNNNPSN). Positions 639–666 (NNNNNNNQNNNNQNNNNNNNNNNNNNNN) are enriched in low complexity. Low complexity predominate over residues 863–882 (SSSSNKNNNNNNNDNNNPSN).

The protein belongs to the protein kinase superfamily. TKL Ser/Thr protein kinase family.

It catalyses the reaction L-seryl-[protein] + ATP = O-phospho-L-seryl-[protein] + ADP + H(+). The catalysed reaction is L-threonyl-[protein] + ATP = O-phospho-L-threonyl-[protein] + ADP + H(+). This chain is Probable serine/threonine-protein kinase DDB_G0290621, found in Dictyostelium discoideum (Social amoeba).